Consider the following 122-residue polypeptide: Large ribosomal subunit protein uL14 (122 aa).

It belongs to the universal ribosomal protein uL14 family. As to quaternary structure, part of the 50S ribosomal subunit. Forms a cluster with proteins L3 and L19. In the 70S ribosome, L14 and L19 interact and together make contacts with the 16S rRNA in bridges B5 and B8.

Functionally, binds to 23S rRNA. Forms part of two intersubunit bridges in the 70S ribosome. The protein is Large ribosomal subunit protein uL14 of Nitrosomonas eutropha (strain DSM 101675 / C91 / Nm57).